A 101-amino-acid chain; its full sequence is MAKKSMIEREIKRAKMVQQYAAKRASLKEITTNADLPMEQRFKAQLKLAELPRNSSATRIHNRCQLTGRPHAYYRKLKLSRIMLRELASFGQIPGMVKSSW.

The protein belongs to the universal ribosomal protein uS14 family. As to quaternary structure, part of the 30S ribosomal subunit. Contacts proteins S3 and S10.

In terms of biological role, binds 16S rRNA, required for the assembly of 30S particles and may also be responsible for determining the conformation of the 16S rRNA at the A site. This is Small ribosomal subunit protein uS14 from Cereibacter sphaeroides (strain ATCC 17029 / ATH 2.4.9) (Rhodobacter sphaeroides).